Here is a 107-residue protein sequence, read N- to C-terminus: uncharacterized protein (107 aa).

The chain crosses the membrane as a helical span at residues 52 to 72 (LIIHDLFIYIFILNFFFFPFC).

It localises to the membrane. This is an uncharacterized protein from Saccharomyces cerevisiae (strain ATCC 204508 / S288c) (Baker's yeast).